The primary structure comprises 318 residues: NADH-ubiquinone oxidoreductase chain 1 (318 aa).

Transmembrane regions (helical) follow at residues 2 to 22 (PVIN…FLML), 69 to 89 (ILYI…WTPL), 100 to 120 (LGLL…LWSG), 146 to 166 (LALI…STLI), 171 to 191 (HSWL…STLA), 222 to 242 (LFFM…AMIF), 253 to 273 (ELHT…FLWI), and 294 to 314 (LPLT…TSGI).

The protein belongs to the complex I subunit 1 family. In terms of assembly, core subunit of respiratory chain NADH dehydrogenase (Complex I) which is composed of 45 different subunits.

It is found in the mitochondrion inner membrane. It carries out the reaction a ubiquinone + NADH + 5 H(+)(in) = a ubiquinol + NAD(+) + 4 H(+)(out). Functionally, core subunit of the mitochondrial membrane respiratory chain NADH dehydrogenase (Complex I) which catalyzes electron transfer from NADH through the respiratory chain, using ubiquinone as an electron acceptor. Essential for the catalytic activity and assembly of complex I. The protein is NADH-ubiquinone oxidoreductase chain 1 (MT-ND1) of Pongo pygmaeus (Bornean orangutan).